Reading from the N-terminus, the 439-residue chain is Ribosomal protein uS12 methylthiotransferase RimO (439 aa).

In terms of domain architecture, MTTase N-terminal spans 7–122 (QTIAVIALGC…LPDLVFGKNF (116 aa)). [4Fe-4S] cluster is bound by residues C16, C52, C85, C155, C159, and C162. One can recognise a Radical SAM core domain in the interval 141–369 (SSTIPSAYLK…NAQYNIFQAK (229 aa)).

The protein belongs to the methylthiotransferase family. RimO subfamily. Requires [4Fe-4S] cluster as cofactor.

It localises to the cytoplasm. It carries out the reaction L-aspartate(89)-[ribosomal protein uS12]-hydrogen + (sulfur carrier)-SH + AH2 + 2 S-adenosyl-L-methionine = 3-methylsulfanyl-L-aspartate(89)-[ribosomal protein uS12]-hydrogen + (sulfur carrier)-H + 5'-deoxyadenosine + L-methionine + A + S-adenosyl-L-homocysteine + 2 H(+). Catalyzes the methylthiolation of an aspartic acid residue of ribosomal protein uS12. This is Ribosomal protein uS12 methylthiotransferase RimO from Endomicrobium trichonymphae.